The primary structure comprises 314 residues: WD repeat domain-containing protein 83 (314 aa).

WD repeat units follow at residues 23-62 (CNQGAVRAVRFNVDGNYCMTCGSDKSLKLWNPHKGSLLKT), 65-104 (GHGYEVLDTAGSCDNSQLCSCSSDKTVILWDVAQGQVVRK), 107-146 (GHAGKVNCVQFNEEATVIISGSIDSSIRCWDCRSRRPDAI), 151-188 (EAKDGISSVKVSAHEILAGSVDGNLRRYDLRKGEMCAD), 189-228 (YLGSPITCVSFSQDSQCLLASSLDSTLRLLDKDTGELLGE), 231-272 (GHQN…LVLK), and 275-313 (VGKAVVQSLSFHPTECCLLTASEGGVQVWRGASYEEEGG).

It belongs to the WD repeat MORG1 family.

It is found in the cytoplasm. Molecular scaffold protein for various multimeric protein complexes. Acts as a module in the assembly of a multicomponent scaffold for the ERK pathway, linking ERK responses to specific agonists. Also involved in response to hypoxia by acting as a negative regulator of HIF1A/HIF-1-alpha. The protein is WD repeat domain-containing protein 83 (wdr83) of Xenopus laevis (African clawed frog).